A 472-amino-acid chain; its full sequence is Inhibitor of Apoptosis OPG037 (472 aa).

ANK repeat units follow at residues 97–126, 130–161, 233–263, 267–297, 322–351, and 353–377; these read DGNYPLHIASKINNNRIVAMLLTHGADPNA, HNKTPLYYLSGTDDEVIERINLLVQYGAKINN, DGNTPLHIVCSKTVKNVDIIDLLLPSTDVNK, FGDSPLTLLIKTLSPAHLINKLLSTSNVITD, YDSTDFKMAVEVGSIRCVKYLLDNDIICED, and MYYAVLSEYETMVDYLLFNHFSVDS.

This sequence belongs to the orthopoxvirus OPG037 protein family. May interact with host caspase-9-Apaf-1 complex.

Its subcellular location is the host cytoplasm. Functionally, inhibits host apoptosis. Acts by associating with host apoptosome. This Homo sapiens (Human) protein is Inhibitor of Apoptosis OPG037 (OPG037).